A 1264-amino-acid polypeptide reads, in one-letter code: BRCA2-interacting transcriptional repressor EMSY (1264 aa).

Residues 1–442 form an interaction with BRCA2 region; that stretch reads MPVVWPTLLD…LPKPVTATLP (442 aa). The region spanning 16–114 is the ENT domain; it reads CKRILRKLEL…EWSIEGRRLV (99 aa). An interaction with ZMYND11 region spans residues 118 to 122; it reads PRLVP. The disordered stretch occupies residues 145–179; that stretch reads PVPAETASKDGVSCSDEDEKPRKRRRTNSSSSSPV. Threonine 171 carries the post-translational modification Phosphothreonine. Phosphoserine occurs at positions 173 and 177. 2 O-linked (GlcNAc) serine glycosylation sites follow: serine 192 and serine 200. At serine 202 the chain carries Phosphoserine. O-linked (GlcNAc) threonine glycosylation occurs at threonine 235. The span at 364 to 406 shows a compositional bias: low complexity; it reads FPKQHQQSPKQQLQQVQQQTQQPVAQPSSVSQQQQPQQSALPP. A disordered region spans residues 364–407; sequence FPKQHQQSPKQQLQQVQQQTQQPVAQPSSVSQQQQPQQSALPPG. Threonine 465 and threonine 470 each carry an O-linked (GlcNAc) threonine glycan. O-linked (GlcNAc) serine glycosylation is present at serine 521. Residues 660-671 show a composition bias toward polar residues; sequence SRVADASNSSAQ. The tract at residues 660–700 is disordered; it reads SRVADASNSSAQEGKEEPQGYTDSSSSSTESSQSSQDSQPV. The span at 681–698 shows a compositional bias: low complexity; it reads TDSSSSSTESSQSSQDSQ. Phosphoserine occurs at positions 782 and 785. Threonine 1069 carries O-linked (GlcNAc) threonine glycosylation. A Phosphoserine modification is found at serine 1085. Positions 1232–1264 are disordered; it reads QLDDDETAMEQDIDSSTEDGTEPSPSQSAVERS. Over residues 1233–1252 the composition is skewed to acidic residues; sequence LDDDETAMEQDIDSSTEDGT. The span at 1254-1264 shows a compositional bias: polar residues; the sequence is PSPSQSAVERS.

Homodimer. Interacts with the transactivation domain of BRCA2. Interacts with CBX1 (via chromoshadow domain). Interacts with ZMYND11. Does not interact with CBX3 or CBX5. Component of a nuclear receptor-mediated transcription complex composed of at least ZNF335, CCAR2 and EMSY; the complex stimulates the transcription of nuclear receptor target genes such as SOX9 and HOXA1. Within the complex interacts with CCAR2 and ZNF335. Components of this complex may associate with components of a histone methylation complex to form a complex at least composed of ZNF335, HCFC1, CCAR2, EMSY, MKI67, RBBP5, ASH2L and WDR5. Within this complex, interacts with ASH2L and RBBP5.

The protein resides in the nucleus. In terms of biological role, regulator which is able to repress transcription, possibly via its interaction with a multiprotein chromatin remodeling complex that modifies the chromatin. Its interaction with BRCA2 suggests that it may play a central role in the DNA repair function of BRCA2. Mediates ligand-dependent transcriptional activation by nuclear hormone receptors. In Mus musculus (Mouse), this protein is BRCA2-interacting transcriptional repressor EMSY.